Consider the following 338-residue polypeptide: MKAPFTSLAGFRAVFETLPQVDAEAVEAATARNETLTKPKGALGRLEELAIWYAGWIGDGRPALERPQVAIFAGNHGIAARGVSAFPPEVTVQMVANYRAGGAAVNQLCHVAGASMTVTELELDRPTLDFTVSPAMTEDELVAALAAGWEAVDDESDLLVVGEMGIGNTTAAAAIAAALFGGTAAEWTGRGSGVAGSALEAKTRVVAEGLERHADALSDPLEVLRCLGGREIAAMAGAIARARVGRTPVILDGFICTSAAAVLHALTPSALDHAIAGHVSAEGAHPAALARIGKEPLLDLGMRLGEGTGAIVAINILRSAVACLSGMATFAEAGVSGG.

Glu-306 functions as the Proton acceptor in the catalytic mechanism.

The protein belongs to the CobT family.

The enzyme catalyses 5,6-dimethylbenzimidazole + nicotinate beta-D-ribonucleotide = alpha-ribazole 5'-phosphate + nicotinate + H(+). The protein operates within nucleoside biosynthesis; alpha-ribazole biosynthesis; alpha-ribazole from 5,6-dimethylbenzimidazole: step 1/2. Functionally, catalyzes the synthesis of alpha-ribazole-5'-phosphate from nicotinate mononucleotide (NAMN) and 5,6-dimethylbenzimidazole (DMB). The sequence is that of Nicotinate-nucleotide--dimethylbenzimidazole phosphoribosyltransferase from Cereibacter sphaeroides (strain ATCC 17023 / DSM 158 / JCM 6121 / CCUG 31486 / LMG 2827 / NBRC 12203 / NCIMB 8253 / ATH 2.4.1.) (Rhodobacter sphaeroides).